A 142-amino-acid chain; its full sequence is Hemoglobin subunit alpha (142 aa).

Residues 2-142 (VLSAADKTNV…VSTVLTSKYR (141 aa)) form the Globin domain. The residue at position 4 (serine 4) is a Phosphoserine. Residue lysine 8 is modified to N6-succinyllysine. A Phosphothreonine modification is found at threonine 9. The residue at position 12 (lysine 12) is an N6-succinyllysine. Lysine 17 bears the N6-acetyllysine; alternate mark. The residue at position 17 (lysine 17) is an N6-succinyllysine; alternate. N6-succinyllysine is present on lysine 41. Position 50 is a phosphoserine (serine 50). Residue histidine 59 coordinates O2. Histidine 88 contributes to the heme b binding site. Serine 103 carries the phosphoserine modification. Threonine 109 is subject to Phosphothreonine. At serine 125 the chain carries Phosphoserine. Threonine 135 and threonine 138 each carry phosphothreonine. The residue at position 139 (serine 139) is a Phosphoserine.

The protein belongs to the globin family. As to quaternary structure, heterotetramer of two alpha chains and two beta chains. Red blood cells.

Functionally, involved in oxygen transport from the lung to the various peripheral tissues. In terms of biological role, hemopressin acts as an antagonist peptide of the cannabinoid receptor CNR1. Hemopressin-binding efficiently blocks cannabinoid receptor CNR1 and subsequent signaling. This Equus zebra (Mountain zebra) protein is Hemoglobin subunit alpha (HBA).